A 149-amino-acid polypeptide reads, in one-letter code: Arginine repressor (149 aa).

Belongs to the ArgR family.

The protein localises to the cytoplasm. It participates in amino-acid biosynthesis; L-arginine biosynthesis [regulation]. Functionally, regulates arginine biosynthesis genes. This Alkaliphilus oremlandii (strain OhILAs) (Clostridium oremlandii (strain OhILAs)) protein is Arginine repressor.